The following is a 606-amino-acid chain: NADH-ubiquinone oxidoreductase chain 5 (606 aa).

Helical transmembrane passes span 4–24 (FPSLMLTSLLMLTLPIITTTI), 38–58 (NIISYAFITSLIPTMMFIHSG), 87–107 (MIFVPVALFVTWSIMEFSMWY), 114–134 (ITQFFKYLLMFLITMMILVTA), 140–160 (LFIGWEGVGIMSFLLISWWYG), 171–191 (AILYNRIGDIGFIMSMAWFLF), 213–233 (LMGLLLAATGKSAQFGLHPWL), 241–261 (TPVSALLHSSTMVVAGVFLLI), 273–293 (VQTFTLCLGAITTLFTAICAL), 301–320 (IIAFSTSSQLGLMIVTIGIN), 325–347 (AFLHICTHAFFKAMLFMCSGSII), 366–386 (MPFTSTSLIIGSLALTGMPFL), 409–429 (LLITLIATSLTAAYSTRMIFF), 457–477 (LLIGSIFAGFFISNNIYPTTI), 488–508 (LTALAVTILGFMMALELSLAT), and 583–603 (LIKLYFLSFLVTLTLSLLLLM).

Belongs to the complex I subunit 5 family. In terms of assembly, core subunit of respiratory chain NADH dehydrogenase (Complex I) which is composed of 45 different subunits.

The protein localises to the mitochondrion inner membrane. The catalysed reaction is a ubiquinone + NADH + 5 H(+)(in) = a ubiquinol + NAD(+) + 4 H(+)(out). Functionally, core subunit of the mitochondrial membrane respiratory chain NADH dehydrogenase (Complex I) which catalyzes electron transfer from NADH through the respiratory chain, using ubiquinone as an electron acceptor. Essential for the catalytic activity and assembly of complex I. This chain is NADH-ubiquinone oxidoreductase chain 5 (MT-ND5), found in Ceratotherium simum (White rhinoceros).